We begin with the raw amino-acid sequence, 667 residues long: Homeobox protein 3 (667 aa).

4 disordered regions span residues 44–108 (FFQP…NSSI), 179–232 (NNNN…TVYN), 249–268 (NNNN…VNNN), and 331–418 (STNK…YQKQ). A compositionally biased stretch (pro residues) spans 52-63 (LPPPTNQQPQPQ). A compositionally biased stretch (polar residues) spans 75–96 (CNSSFENSPQQPTSPLLISSQT). A compositionally biased stretch (low complexity) spans 97 to 108 (SYPSDLSSNSSI). Residues 334–343 (KRMKISHHSH) show a composition bias toward basic residues. The segment covering 344–379 (SLSNNNENSLSQPYFNNNNNNNNENENVYNIVNEQN) has biased composition (low complexity). Polar residues predominate over residues 380-390 (PTFNPNQSNTH). The stretch at 386–454 (QSNTHQQQEE…ENENVICSEF (69 aa)) forms a coiled coil. Positions 602–664 (EFKSRRILSE…NKRMRDKSNK (63 aa)) form a DNA-binding region, homeobox.

It is found in the nucleus. Putative transcription factor. This chain is Homeobox protein 3 (hbx3), found in Dictyostelium discoideum (Social amoeba).